We begin with the raw amino-acid sequence, 280 residues long: Protease HtpX (280 aa).

The next 2 membrane-spanning stretches (helical) occupy residues 7 to 26 (TFIL…GLLG) and 30 to 49 (GMLI…YWYS). H129 contributes to the Zn(2+) binding site. Residue E130 is part of the active site. H133 provides a ligand contact to Zn(2+). 2 helical membrane-spanning segments follow: residues 146–166 (ATIA…SMFG) and 178–198 (VVGM…QMAI). E203 serves as a coordination point for Zn(2+).

This sequence belongs to the peptidase M48B family. The cofactor is Zn(2+).

It localises to the cell inner membrane. The sequence is that of Protease HtpX from Legionella pneumophila subsp. pneumophila (strain Philadelphia 1 / ATCC 33152 / DSM 7513).